Reading from the N-terminus, the 265-residue chain is Imidazole glycerol phosphate synthase subunit HisF (265 aa).

Catalysis depends on residues aspartate 17 and aspartate 136.

It belongs to the HisA/HisF family. In terms of assembly, heterodimer of HisH and HisF.

Its subcellular location is the cytoplasm. It catalyses the reaction 5-[(5-phospho-1-deoxy-D-ribulos-1-ylimino)methylamino]-1-(5-phospho-beta-D-ribosyl)imidazole-4-carboxamide + L-glutamine = D-erythro-1-(imidazol-4-yl)glycerol 3-phosphate + 5-amino-1-(5-phospho-beta-D-ribosyl)imidazole-4-carboxamide + L-glutamate + H(+). It functions in the pathway amino-acid biosynthesis; L-histidine biosynthesis; L-histidine from 5-phospho-alpha-D-ribose 1-diphosphate: step 5/9. In terms of biological role, IGPS catalyzes the conversion of PRFAR and glutamine to IGP, AICAR and glutamate. The HisF subunit catalyzes the cyclization activity that produces IGP and AICAR from PRFAR using the ammonia provided by the HisH subunit. The polypeptide is Imidazole glycerol phosphate synthase subunit HisF (Mycobacterium avium (strain 104)).